Consider the following 143-residue polypeptide: Protein STIG1 (143 aa).

Residues 1–23 form the signal peptide; it reads MDFIILLIAILALSSTPITIISG. Positions 76 to 87 are sufficient for PI(4)P binding; sequence RTCCFNYFCVDL. The interval 80–83 is sufficient for binding to the extracellular domain of PRK2; sequence FNYF. The sufficient for PI(3)P binding stretch occupies residues 88-115; that stretch reads FTNRFNCGSCGLVCIVGTRCCGGICVDI.

It belongs to the STIG1 family. Interacts with PRK1 and PRK2 (via extracellular domain). In terms of tissue distribution, expressed in the stigma and the upper section of the style.

It localises to the secreted. Its subcellular location is the extracellular space. It is found in the apoplast. Its function is as follows. Promotes pollen tube growth. A C-terminal peptide is cleaved from the propeptide in the stigmatic exudate and represent the major form of STIG1. Binds phosphoinositol lipids. The binding of external phosphatidylinositol 3-phosphate (PI(3)P) and PRK2 by STIG1 induces a rapid intracellular reactive oxygen species elevation. The sequence is that of Protein STIG1 from Solanum lycopersicum (Tomato).